Consider the following 542-residue polypeptide: Glucose-6-phosphate isomerase (542 aa).

The active-site Proton donor is the Glu-354. Catalysis depends on residues His-385 and Lys-505.

Belongs to the GPI family.

It localises to the cytoplasm. The enzyme catalyses alpha-D-glucose 6-phosphate = beta-D-fructose 6-phosphate. It functions in the pathway carbohydrate biosynthesis; gluconeogenesis. It participates in carbohydrate degradation; glycolysis; D-glyceraldehyde 3-phosphate and glycerone phosphate from D-glucose: step 2/4. Functionally, catalyzes the reversible isomerization of glucose-6-phosphate to fructose-6-phosphate. The protein is Glucose-6-phosphate isomerase of Nitrosospira multiformis (strain ATCC 25196 / NCIMB 11849 / C 71).